The following is a 783-amino-acid chain: uncharacterized protein (783 aa).

The disordered stretch occupies residues 1–22 (MVNTRGYTTLPNVEEPANNSQD). Over 1–109 (MVNTRGYTTL…SKIGNVMVMR (109 aa)) the chain is Cytoplasmic. The chain crosses the membrane as a helical; Signal-anchor for type II membrane protein span at residues 110-127 (RIFYIMMMSIIAALIIAS). Residues 128–783 (DRLPNGKARG…NLHGINTNEF (656 aa)) are Extracellular-facing. N-linked (GlcNAc...) asparagine glycosylation is found at Asn-139 and Asn-213. One can recognise a PA domain in the interval 241–333 (HNGQLNNIPV…GTGDALTPEW (93 aa)). Asn-529 is a glycosylation site (N-linked (GlcNAc...) asparagine).

It is found in the cell membrane. This is an uncharacterized protein from Saccharomyces cerevisiae (strain ATCC 204508 / S288c) (Baker's yeast).